Reading from the N-terminus, the 214-residue chain is MATRGAVAAAASTIWKHRRNPSLRSLSRHFNPNFNHRIIPTGFKYQVRAIQGTSTDPVITPLKNREEPKPQNWKIKMLYDGDCPLCMREVNMLMERNEKHGTIKFVDISSNDYSPEDNQGLDYKTVMGQIHAIQSDGNVVKGVEAFRRLYEEVGLGWVYTITKFEPIGKLADVVYDVWAKYRLQVTGRPSIEAILEARKKDKVETCGESKNCKI.

The N-terminal 49 residues, 1-49, are a transit peptide targeting the chloroplast; it reads MATRGAVAAAASTIWKHRRNPSLRSLSRHFNPNFNHRIIPTGFKYQVRA.

The protein localises to the plastid. The protein resides in the chloroplast. This is an uncharacterized protein from Arabidopsis thaliana (Mouse-ear cress).